Reading from the N-terminus, the 215-residue chain is Cardiolipin synthase (CMP-forming) (215 aa).

The next 5 membrane-spanning stretches (helical) occupy residues 29–49, 60–80, 117–137, 158–178, and 179–199; these read IPNILSMARLAGVPLFLWLIL, GWALLVLALSGVSDYLDGKLA, LWLTLVLLAREAMLLVMVGIL, LMYAFPLLLLSDGSGWIASLA, and AVFGWAFAGWGTTLYWWAGVL.

This sequence belongs to the CDP-alcohol phosphatidyltransferase class-I family. It depends on a divalent metal cation as a cofactor.

The protein localises to the cell membrane. The enzyme catalyses a CDP-1,2-diacyl-sn-glycerol + a 1,2-diacyl-sn-glycero-3-phospho-(1'-sn-glycerol) = a cardiolipin + CMP + H(+). In terms of biological role, catalyzes the synthesis of cardiolipin (CL) (diphosphatidylglycerol) by specifically transferring a phosphatidyl group from CDP-diacylglycerol to phosphatidylglycerol (PG). This chain is Cardiolipin synthase (CMP-forming), found in Streptomyces coelicolor (strain ATCC BAA-471 / A3(2) / M145).